We begin with the raw amino-acid sequence, 160 residues long: 2-C-methyl-D-erythritol 2,4-cyclodiphosphate synthase (160 aa).

A divalent metal cation contacts are provided by Asp-11 and His-13. 4-CDP-2-C-methyl-D-erythritol 2-phosphate-binding positions include 11–13 (DVH) and 37–38 (HS). His-45 serves as a coordination point for a divalent metal cation. 4-CDP-2-C-methyl-D-erythritol 2-phosphate is bound by residues 59-61 (DIG), 64-68 (FPDTD), 103-109 (AQAPKMA), 135-138 (TTTE), Phe-142, and Arg-145.

Belongs to the IspF family. In terms of assembly, homotrimer. A divalent metal cation is required as a cofactor.

The enzyme catalyses 4-CDP-2-C-methyl-D-erythritol 2-phosphate = 2-C-methyl-D-erythritol 2,4-cyclic diphosphate + CMP. Its pathway is isoprenoid biosynthesis; isopentenyl diphosphate biosynthesis via DXP pathway; isopentenyl diphosphate from 1-deoxy-D-xylulose 5-phosphate: step 4/6. In terms of biological role, involved in the biosynthesis of isopentenyl diphosphate (IPP) and dimethylallyl diphosphate (DMAPP), two major building blocks of isoprenoid compounds. Catalyzes the conversion of 4-diphosphocytidyl-2-C-methyl-D-erythritol 2-phosphate (CDP-ME2P) to 2-C-methyl-D-erythritol 2,4-cyclodiphosphate (ME-CPP) with a corresponding release of cytidine 5-monophosphate (CMP). The chain is 2-C-methyl-D-erythritol 2,4-cyclodiphosphate synthase from Thiobacillus denitrificans (strain ATCC 25259 / T1).